A 138-amino-acid chain; its full sequence is Large ribosomal subunit protein uL16 (138 aa).

Basic residues predominate over residues 1–13 (MLQPARRKFRKEQ). Residues 1–22 (MLQPARRKFRKEQKGRNTGVAT) are disordered.

Belongs to the universal ribosomal protein uL16 family. As to quaternary structure, part of the 50S ribosomal subunit.

Its function is as follows. Binds 23S rRNA and is also seen to make contacts with the A and possibly P site tRNAs. In Acidovorax ebreus (strain TPSY) (Diaphorobacter sp. (strain TPSY)), this protein is Large ribosomal subunit protein uL16.